Consider the following 152-residue polypeptide: Ribosome maturation factor RimP (152 aa).

This sequence belongs to the RimP family.

The protein resides in the cytoplasm. In terms of biological role, required for maturation of 30S ribosomal subunits. This chain is Ribosome maturation factor RimP, found in Desulfatibacillum aliphaticivorans.